Here is a 2025-residue protein sequence, read N- to C-terminus: E3 ubiquitin-protein ligase TTC3 (2025 aa).

Residues 1-230 (MDNFAEGDFT…TQSCMDCIEE (230 aa)) form an interaction with POLG region. TPR repeat units follow at residues 231–264 (GELMKMKGNEEFSKERFDIAIIYYTRAIEYRPEN) and 266–298 (LLYGNRALCFLRTGQFRNALGDGKRATILKNTW). Ser-378 carries the phosphoserine; by PKB/AKT2 modification. The tract at residues 423–458 (DCHPEFSPPSSQPPKHKGKQKSRNNESEKFSSSSPL) is disordered. TPR repeat units follow at residues 536–572 (VLVVYGLAISLLGIGQPEELSEAENQFKRIIEHYPSE) and 576–609 (CLAYCGIGKVYLKKNRFLEALNHFEKARTLIYRL). Residues 786 to 805 (ERMEEDLRESNPPKNEEQKE) are disordered. Basic and acidic residues predominate over residues 793–805 (RESNPPKNEEQKE). The residue at position 1009 (Ser-1009) is a Phosphoserine. Disordered regions lie at residues 1012-1068 (APFS…GPFA), 1215-1295 (KPDV…SCNS), 1773-1842 (DPSV…SPKK), and 1894-1944 (ILDE…QKAE). A compositionally biased stretch (basic residues) spans 1019–1029 (VKNKSKKKKPK). Polar residues predominate over residues 1038-1052 (SGTTSVTSNNEIITS). Ser-1061 carries the phosphoserine modification. Residues 1894–1912 (ILDEQKKKKPNPGKDKRTY) are compositionally biased toward basic and acidic residues. Residues 1913 to 1928 (EPSSATPVTRSSQGSP) are compositionally biased toward polar residues. An RING-type zinc finger spans residues 1957 to 1997 (CEICHEVFKSKNVRVLKCGHKYHKGCFKQWLKGQSACPACQ). Residues 2004 to 2025 (EESPSGRGWPSQNQELPSCSSR) are disordered. Polar residues predominate over residues 2013–2025 (PSQNQELPSCSSR).

As to quaternary structure, interacts (when phosphorylated on Ser-378) with AKT1, AKT2 and AKT3 (when phosphorylated). Interacts with CIT. Interacts with POLG. Interacts with HSP70. Interacts with SMURF2. In terms of processing, phosphorylation on Ser-378 by Akt is required for ubiquitin ligase activity. Post-translationally, proteolytically cleaved into differently sized N- and C-terminal fragments. Found in all tissues examined.

The protein localises to the nucleus. It localises to the cytoplasm. Its subcellular location is the golgi apparatus. It catalyses the reaction S-ubiquitinyl-[E2 ubiquitin-conjugating enzyme]-L-cysteine + [acceptor protein]-L-lysine = [E2 ubiquitin-conjugating enzyme]-L-cysteine + N(6)-ubiquitinyl-[acceptor protein]-L-lysine.. It functions in the pathway protein modification; protein ubiquitination. E3 ubiquitin-protein ligase which catalyzes the formation of 'Lys-48'-polyubiquitin chains. Mediates the ubiquitination and subsequent degradation of phosphorylated Akt (AKT1, AKT2 and AKT3) in the nucleus. Acts as a terminal regulator of Akt signaling after activation; its phosphorylation by Akt, which is a prerequisite for ubiquitin ligase activity, suggests the existence of a regulation mechanism required to control Akt levels after activation. Positively regulates TGFB1-induced epithelial-mesenchymal transition and myofibroblast differentiation by mediating the ubiquitination and subsequent degradation of SMURF2. Regulates neuronal differentiation by regulating actin remodeling and Golgi organization via a signaling cascade involving RHOA, CIT and ROCK. Inhibits cell proliferation. The protein is E3 ubiquitin-protein ligase TTC3 (TTC3) of Homo sapiens (Human).